We begin with the raw amino-acid sequence, 1384 residues long: DNA-directed RNA polymerase subunit beta' (1384 aa).

Residues Cys-81, Cys-83, Cys-96, and Cys-99 each coordinate Zn(2+). The Mg(2+) site is built by Asp-472, Asp-474, and Asp-476.

This sequence belongs to the RNA polymerase beta' chain family. The RNAP catalytic core consists of 2 alpha, 1 beta, 1 beta' and 1 omega subunit. When a sigma factor is associated with the core the holoenzyme is formed, which can initiate transcription. The cofactor is Mg(2+). Zn(2+) is required as a cofactor.

It carries out the reaction RNA(n) + a ribonucleoside 5'-triphosphate = RNA(n+1) + diphosphate. In terms of biological role, DNA-dependent RNA polymerase catalyzes the transcription of DNA into RNA using the four ribonucleoside triphosphates as substrates. This is DNA-directed RNA polymerase subunit beta' from Opitutus terrae (strain DSM 11246 / JCM 15787 / PB90-1).